The following is a 452-amino-acid chain: La-related protein 1B (452 aa).

Positions 1–22 are enriched in low complexity; sequence MATTASSAANSASRFSIDSSIS. A disordered region spans residues 1-251; sequence MATTASSAAN…GFSHRNYSGR (251 aa). Ala2 bears the N-acetylalanine mark. Residues 44–68 are compositionally biased toward polar residues; it reads LSLSQDDPFSAPSVSPPTGNNSSDY. Composition is skewed to low complexity over residues 99–117, 136–163, 171–185, and 206–223; these read SWPA…SPSL, ATSN…VNNS, NNNT…NVSN, and SGNF…SYPR. A compositionally biased stretch (basic and acidic residues) spans 225–236; it reads EGLHHGNRRNYE. Residues 237–247 show a composition bias toward polar residues; the sequence is HGNQSGFSHRN. The 90-residue stretch at 328 to 417 folds into the HTH La-type RNA-binding domain; that stretch reads RNFDAILYNK…RGDWDKYLLP (90 aa). The tract at residues 419-452 is disordered; sequence EPSRSGPAAGASNNASLVSQIESMTLSERSREGV. Residues 422-434 show a composition bias toward low complexity; the sequence is RSGPAAGASNNAS. Positions 435–445 are enriched in polar residues; the sequence is LVSQIESMTLS.

Belongs to the LARP family.

The protein resides in the cytoplasm. Functionally, promotes leaf senescence. The protein is La-related protein 1B (LARP1B) of Arabidopsis thaliana (Mouse-ear cress).